Reading from the N-terminus, the 148-residue chain is Truncated transcription factor CAULIFLOWER C (148 aa).

Positions Met-1–Ser-61 constitute an MADS-box domain. Positions Gln-90–Lys-148 constitute a K-box; partial domain.

Homodimer capable of binding to CArG-box sequences.

The protein localises to the nucleus. Its function is as follows. Probable transcription factor that promotes early floral meristem identity in synergy with APETALA1, FRUITFULL and LEAFY. Is required subsequently for the transition of an inflorescence meristem into a floral meristem. Seems to be partially redundant to the function of APETALA1. This is Truncated transcription factor CAULIFLOWER C (CAL-C) from Brassica oleracea var. botrytis (Cauliflower).